Reading from the N-terminus, the 180-residue chain is Large ribosomal subunit protein uL6 (180 aa).

It belongs to the universal ribosomal protein uL6 family. Part of the 50S ribosomal subunit.

Functionally, this protein binds to the 23S rRNA, and is important in its secondary structure. It is located near the subunit interface in the base of the L7/L12 stalk, and near the tRNA binding site of the peptidyltransferase center. This chain is Large ribosomal subunit protein uL6, found in Clostridium tetani (strain Massachusetts / E88).